Consider the following 73-residue polypeptide: Antimicrobial peptide 6 (73 aa).

The first 22 residues, 1–22 (MQIKHLITLFFLVLIVADQCSA), serve as a signal peptide directing secretion. Positions 45 to 73 (EISTQIDQYRNLQKREAELEELLDRLPMY) are excised as a propeptide.

It belongs to the non-disulfide-bridged peptide (NDBP) superfamily. Short antimicrobial peptide (group 4) family. As to expression, expressed by the venom gland.

The protein localises to the secreted. Antibacterial peptide. In Tityus costatus (Brazilian scorpion), this protein is Antimicrobial peptide 6.